Reading from the N-terminus, the 265-residue chain is Selenoprotein Pb (265 aa).

An N-terminal signal peptide occupies residues 1 to 18 (MQALWPLLLSALPALLGA). N-linked (GlcNAc...) asparagine glycosylation occurs at Asn-28. Residue Sec-64 is a non-standard amino acid, selenocysteine. N-linked (GlcNAc...) asparagine glycosylation is found at Asn-88, Asn-178, Asn-184, and Asn-207. Positions 188–265 (SESSDSTKND…SHQEHVHNHR (78 aa)) are disordered. Positions 201–211 (ENNQRPNSTEP) are enriched in polar residues. Residues 215–231 (AHHHHHQQHEPHHHHHN) show a composition bias toward basic residues. The span at 239–265 (KSGDSDVTGKPKEPPHHSHQEHVHNHR) shows a compositional bias: basic and acidic residues.

The protein resides in the secreted. Its function is as follows. Might be responsible for some of the extracellular antioxidant defense properties of selenium. This Danio rerio (Zebrafish) protein is Selenoprotein Pb (sepp1b).